Here is a 299-residue protein sequence, read N- to C-terminus: Taste receptor type 2 member 19 (299 aa).

Met-1 is a topological domain (extracellular). A helical transmembrane segment spans residues 2–22 (MCFLLIILSILVVFAFVLGNF). At 23 to 55 (SNGFIALVNVIDWVNTRKISSADQILTALVVSR) the chain is on the cytoplasmic side. Residues 56-76 (IGLLWVMLFLWYATVFNSALY) traverse the membrane as a helical segment. Residues 77–87 (GLEVRIVASNA) lie on the Extracellular side of the membrane. The chain crosses the membrane as a helical span at residues 88–108 (WAVMNHFSIWLAASLSIFCLL). At 109–127 (KIANFSNLIFLHLKKRIKS) the chain is on the cytoplasmic side. Residues 128–148 (VVLVILLGPLVFLICNLAVIT) form a helical membrane-spanning segment. Over 149-181 (MDERVWTKEYEGNVTWKIKLRNAIQLSSLTVTT) the chain is Extracellular. Residue Asn-161 is glycosylated (N-linked (GlcNAc...) asparagine). The chain crosses the membrane as a helical span at residues 182 to 202 (LANLIPFTLSLICFLLLICSL). The Cytoplasmic portion of the chain corresponds to 203–226 (CKHLKKMRLHSKGSQDPSTKVHIK). The helical transmembrane segment at 227-247 (ALQTVTSFLMLFAIYFLCIIT) threads the bilayer. Topologically, residues 248-259 (STWNLRTQQSKL) are extracellular. The helical transmembrane segment at 260 to 280 (VLLLCQTVAIMYPSFHSFILI) threads the bilayer. The Cytoplasmic portion of the chain corresponds to 281–299 (MGSRKLKQTFLSVLWQMTR).

Belongs to the G-protein coupled receptor T2R family.

The protein resides in the membrane. In terms of biological role, receptor that may play a role in the perception of bitterness and is gustducin-linked. May play a role in sensing the chemical composition of the gastrointestinal content. The activity of this receptor may stimulate alpha gustducin, mediate PLC-beta-2 activation and lead to the gating of TRPM5. This is Taste receptor type 2 member 19 (TAS2R19) from Pan paniscus (Pygmy chimpanzee).